Reading from the N-terminus, the 338-residue chain is Mitochondrial glutathione transporter SLC25A40 (338 aa).

Solcar repeat units follow at residues 13–131 (VTPL…LSAL), 139–223 (NETC…LKKW), and 233–327 (PTFM…GKAF). Transmembrane regions (helical) follow at residues 19–39 (MLAS…LDVV), 103–123 (LWSG…IYFT), 142–162 (CIPI…ISPL), 199–220 (WAPT…YEIL), 239–259 (FTSG…FDVV), and 298–318 (GLFS…AIMI).

Belongs to the mitochondrial carrier (TC 2.A.29) family.

It localises to the mitochondrion inner membrane. It carries out the reaction glutathione(in) = glutathione(out). Its function is as follows. Probable mitochondrial transporter required for glutathione import into mitochondria. Glutathione, which plays key roles in oxidative metabolism, is produced exclusively in the cytosol and is imported in many organelles. Mitochondrial glutathione is required for the activity and stability of proteins containing iron-sulfur clusters, as well as erythropoiesis. In Homo sapiens (Human), this protein is Mitochondrial glutathione transporter SLC25A40.